Consider the following 166-residue polypeptide: MALSVRILGIDPGLRRMGWGVIRVEGSRLSAIAHGVVTPPTAAPLSERLMHLFNSVGDLVRQHGPDEAAIEEAFMAANAASALKLGHARAAAMLAPARAGLPVAEYAARLVKKSVVGTGAADKAQVAAMVGILLPGTKATADAADALAIAICHAHHRRATSLGSAA.

Active-site residues include D11, E71, and D142. Mg(2+)-binding residues include D11, E71, and D142.

Belongs to the RuvC family. Homodimer which binds Holliday junction (HJ) DNA. The HJ becomes 2-fold symmetrical on binding to RuvC with unstacked arms; it has a different conformation from HJ DNA in complex with RuvA. In the full resolvosome a probable DNA-RuvA(4)-RuvB(12)-RuvC(2) complex forms which resolves the HJ. Mg(2+) serves as cofactor.

It is found in the cytoplasm. It catalyses the reaction Endonucleolytic cleavage at a junction such as a reciprocal single-stranded crossover between two homologous DNA duplexes (Holliday junction).. Functionally, the RuvA-RuvB-RuvC complex processes Holliday junction (HJ) DNA during genetic recombination and DNA repair. Endonuclease that resolves HJ intermediates. Cleaves cruciform DNA by making single-stranded nicks across the HJ at symmetrical positions within the homologous arms, yielding a 5'-phosphate and a 3'-hydroxyl group; requires a central core of homology in the junction. The consensus cleavage sequence is 5'-(A/T)TT(C/G)-3'. Cleavage occurs on the 3'-side of the TT dinucleotide at the point of strand exchange. HJ branch migration catalyzed by RuvA-RuvB allows RuvC to scan DNA until it finds its consensus sequence, where it cleaves and resolves the cruciform DNA. This is Crossover junction endodeoxyribonuclease RuvC from Maricaulis maris (strain MCS10) (Caulobacter maris).